The chain runs to 285 residues: Methanethiol S-methyltransferase 1 (285 aa).

5 helical membrane passes run 55-75 (AYLV…GLVV), 88-108 (AEAV…HSVM), 132-152 (LFAS…PTVI), 162-182 (VTLV…TFII), and 224-244 (FIVA…FAAV).

This sequence belongs to the nurim family.

It is found in the membrane. The catalysed reaction is methanethiol + S-adenosyl-L-methionine = dimethyl sulfide + S-adenosyl-L-homocysteine + H(+). Catalyzes the methylation of methanethiol (MeSH) to yield dimethylsulphide (DMS). This Bradyrhizobium diazoefficiens (strain JCM 10833 / BCRC 13528 / IAM 13628 / NBRC 14792 / USDA 110) protein is Methanethiol S-methyltransferase 1.